A 113-amino-acid chain; its full sequence is Fruiting body-specific class I hydrophobin fbh1 (113 aa).

The N-terminal stretch at methionine 1–isoleucine 23 is a signal peptide. 4 disulfide bridges follow: cysteine 33-cysteine 92, cysteine 40-cysteine 86, cysteine 41-cysteine 73, and cysteine 93-cysteine 106.

Belongs to the fungal hydrophobin family. In terms of assembly, self-assembles to form functional amyloid fibrils called rodlets. Self-assembly into fibrillar rodlets occurs spontaneously at hydrophobic:hydrophilic interfaces and the rodlets further associate laterally to form amphipathic monolayers.

The protein localises to the secreted. It localises to the cell wall. Aerial growth, conidiation, and dispersal of filamentous fungi in the environment rely upon a capability of their secreting small amphipathic proteins called hydrophobins (HPBs) with low sequence identity. Class I can self-assemble into an outermost layer of rodlet bundles on aerial cell surfaces, conferring cellular hydrophobicity that supports fungal growth, development and dispersal; whereas Class II form highly ordered films at water-air interfaces through intermolecular interactions but contribute nothing to the rodlet structure. Fbh1 is a fruiting body-specific class I hydrophobin that is involved in the growth rate and primordia formation. This is Fruiting body-specific class I hydrophobin fbh1 from Pleurotus ostreatus (Oyster mushroom).